We begin with the raw amino-acid sequence, 333 residues long: Phosphate acyltransferase (333 aa).

This sequence belongs to the PlsX family. Homodimer. Probably interacts with PlsY.

It is found in the cytoplasm. It carries out the reaction a fatty acyl-[ACP] + phosphate = an acyl phosphate + holo-[ACP]. Its pathway is lipid metabolism; phospholipid metabolism. Functionally, catalyzes the reversible formation of acyl-phosphate (acyl-PO(4)) from acyl-[acyl-carrier-protein] (acyl-ACP). This enzyme utilizes acyl-ACP as fatty acyl donor, but not acyl-CoA. The protein is Phosphate acyltransferase of Lactobacillus gasseri (strain ATCC 33323 / DSM 20243 / BCRC 14619 / CIP 102991 / JCM 1131 / KCTC 3163 / NCIMB 11718 / NCTC 13722 / AM63).